A 273-amino-acid chain; its full sequence is Type IV secretion system protein PtlF (273 aa).

The first 20 residues, 1–20 (MMAARMMAAGLAATALSAHA), serve as a signal peptide directing secretion.

Belongs to the TrbG/VirB9 family. Forms a complex with PtlI.

The protein resides in the cell outer membrane. Its function is as follows. Component of the type IV secretion system ptl required for secretion of assembled pertussis toxin (PTX) through the outer membrane. The chain is Type IV secretion system protein PtlF (ptlF) from Bordetella pertussis (strain Tohama I / ATCC BAA-589 / NCTC 13251).